Consider the following 206-residue polypeptide: Dephospho-CoA kinase (206 aa).

The DPCK domain maps to 4 to 204; that stretch reads IVGLTGGIGS…QFYLQQAENK (201 aa). Residue 12–17 coordinates ATP; that stretch reads GSGKTT.

This sequence belongs to the CoaE family.

The protein localises to the cytoplasm. It catalyses the reaction 3'-dephospho-CoA + ATP = ADP + CoA + H(+). Its pathway is cofactor biosynthesis; coenzyme A biosynthesis; CoA from (R)-pantothenate: step 5/5. Its function is as follows. Catalyzes the phosphorylation of the 3'-hydroxyl group of dephosphocoenzyme A to form coenzyme A. This is Dephospho-CoA kinase from Haemophilus influenzae (strain ATCC 51907 / DSM 11121 / KW20 / Rd).